The following is a 365-amino-acid chain: MAGNVFGQMFRITTWGESHGRAVGVVVDGLPAGLPFSEADIQKELDRRRPGQSEVSTPRSEADSVEILSGIFEGKSTGTPISMLVWNSDARSSSYDAIKNTPRPGHADFTYIARYGIRDHRGGGRSSARETIGRVAGGALAKLLLSHYGIRIVGHVLELGGIRAKSLSFEEILENVERTPVRCADPEAAKKMLEKVSALRQEGDSAGGIVEVMVKGVPAGLGEPVFDRLDADLAKALMSIPAVKGFEIGAGFEAARMRGSEMNDSFLMEDGKVTCSSNNAGGILGGISSGLDIVCRVAVKPTPSISKLQQTVDLTTRENAEIAIKGRHDPTIPPRMVPVAEAMVALVFADHMLRSGFINPRTLLG.

Positions 41 to 51 are enriched in basic and acidic residues; that stretch reads IQKELDRRRPG. The tract at residues 41–62 is disordered; it reads IQKELDRRRPGQSEVSTPRSEA. Position 48 (Arg48) interacts with NADP(+). FMN contacts are provided by residues 125 to 127, Gly285, 300 to 304, and Arg327; these read RSS and KPTPS.

Belongs to the chorismate synthase family. The cofactor is FMNH2.

The catalysed reaction is 5-O-(1-carboxyvinyl)-3-phosphoshikimate = chorismate + phosphate. Its pathway is metabolic intermediate biosynthesis; chorismate biosynthesis; chorismate from D-erythrose 4-phosphate and phosphoenolpyruvate: step 7/7. Functionally, catalyzes the anti-1,4-elimination of the C-3 phosphate and the C-6 proR hydrogen from 5-enolpyruvylshikimate-3-phosphate (EPSP) to yield chorismate, which is the branch point compound that serves as the starting substrate for the three terminal pathways of aromatic amino acid biosynthesis. This reaction introduces a second double bond into the aromatic ring system. The polypeptide is Chorismate synthase (Methanosarcina mazei (strain ATCC BAA-159 / DSM 3647 / Goe1 / Go1 / JCM 11833 / OCM 88) (Methanosarcina frisia)).